The following is a 443-amino-acid chain: Probable glycine dehydrogenase (decarboxylating) subunit 1 (443 aa).

It belongs to the GcvP family. N-terminal subunit subfamily. In terms of assembly, the glycine cleavage system is composed of four proteins: P, T, L and H. In this organism, the P 'protein' is a heterodimer of two subunits.

The enzyme catalyses N(6)-[(R)-lipoyl]-L-lysyl-[glycine-cleavage complex H protein] + glycine + H(+) = N(6)-[(R)-S(8)-aminomethyldihydrolipoyl]-L-lysyl-[glycine-cleavage complex H protein] + CO2. The glycine cleavage system catalyzes the degradation of glycine. The P protein binds the alpha-amino group of glycine through its pyridoxal phosphate cofactor; CO(2) is released and the remaining methylamine moiety is then transferred to the lipoamide cofactor of the H protein. This Endomicrobium trichonymphae protein is Probable glycine dehydrogenase (decarboxylating) subunit 1.